The following is a 442-amino-acid chain: 6-phospho-alpha-glucosidase 1 (442 aa).

An NAD(+)-binding site is contributed by 6 to 72; sequence FSVLIAGGGS…PEVEFLATTD (67 aa). Residues arginine 95 and asparagine 149 each contribute to the substrate site. Cysteine 171 serves as a coordination point for Mn(2+). Residue aspartate 172 is the Proton donor of the active site. Histidine 202 contributes to the Mn(2+) binding site. Tyrosine 265 acts as the Proton acceptor in catalysis. Arginine 285 lines the substrate pocket.

This sequence belongs to the glycosyl hydrolase 4 family. In terms of assembly, homodimer. May also form homotetramer. Mn(2+) serves as cofactor. It depends on Co(2+) as a cofactor. The cofactor is Ni(2+). Requires Fe(2+) as cofactor. Mg(2+) is required as a cofactor. NAD(+) serves as cofactor.

The enzyme catalyses alpha-maltose 6'-phosphate + H2O = D-glucose 6-phosphate + D-glucose. With respect to regulation, is inhibited by EDTA in vitro. Functionally, is probably involved in the catabolism of alpha-glycosides accumulated via a phosphoenolpyruvate-dependent phosphotransferase system (PEP-PTS). Hydrolyzes a wide variety of 6-phospho-alpha-D-glucosides including the five isomeric derivatives of sucrose, i.e. trehalulose-6'-phosphate, turanose-6'-phosphate, maltulose-6'-phosphate, leucrose-6'-phosphate, and palatinose-6'-phosphate, but is not active on sucrose-6-phosphate. Can also hydrolyze maltose-6'-phosphate and methyl-alpha-glucose-6-phosphate, and poorly, trehalose-6-phosphate. Fails to hydrolyze beta-O-linked phosphorylated disaccharides such as cellobiose-6'-phosphate and gentiobiose-6'-phosphate. Does not seem to be involved in maltose catabolism. The sequence is that of 6-phospho-alpha-glucosidase 1 (simA) from Lacticaseibacillus paracasei (strain ATCC 334 / BCRC 17002 / CCUG 31169 / CIP 107868 / KCTC 3260 / NRRL B-441) (Lactobacillus paracasei).